The primary structure comprises 561 residues: Lysine--tRNA ligase (561 aa).

Mg(2+) contacts are provided by glutamate 409 and glutamate 416.

It belongs to the class-II aminoacyl-tRNA synthetase family. Homodimer. Mg(2+) serves as cofactor.

Its subcellular location is the cytoplasm. The catalysed reaction is tRNA(Lys) + L-lysine + ATP = L-lysyl-tRNA(Lys) + AMP + diphosphate. This chain is Lysine--tRNA ligase, found in Nostoc punctiforme (strain ATCC 29133 / PCC 73102).